A 173-amino-acid polypeptide reads, in one-letter code: RxLR effector protein PITG_10232 (173 aa).

An N-terminal signal peptide occupies residues 1–24; it reads MRLGYLIVGCAVALLATTDGVVDA. The disordered stretch occupies residues 25–64; that stretch reads SSKHKQLSTDVPRPADDISSERFLRSQDTPEDDGNPAHED. Over residues 37–49 the composition is skewed to basic and acidic residues; it reads RPADDISSERFLR. Residues 46–65 carry the RxLR-dEER motif; it reads RFLRSQDTPEDDGNPAHEDR.

This sequence belongs to the RxLR effector family.

Its subcellular location is the secreted. It is found in the host nucleus. The protein localises to the host cytoplasm. Functionally, effector that leads to host programmed cell death. This is RxLR effector protein PITG_10232 from Phytophthora infestans (strain T30-4) (Potato late blight agent).